The following is a 106-amino-acid chain: Large ribosomal subunit protein eL42 (106 aa).

Residues 36 to 56 form a disordered region; sequence FAQGKRRYDRKQSGYGGQTKP.

This sequence belongs to the eukaryotic ribosomal protein eL42 family.

In Coprinopsis cinerea (strain Okayama-7 / 130 / ATCC MYA-4618 / FGSC 9003) (Inky cap fungus), this protein is Large ribosomal subunit protein eL42 (RPL44).